The sequence spans 2498 residues: Nuclear receptor corepressor 1 (2498 aa).

4 disordered regions span residues 1-38 (MSSS…QQEY), 54-84 (IQQQ…SGYD), 134-169 (SEVK…SKLS), and 198-223 (QQQL…VEQK). Composition is skewed to basic and acidic residues over residues 71–82 (PVSDRPQDRRSG), 134–148 (SEVK…KHES), and 204–213 (EAAKPPEPEK). The interaction with tbl1xr1-A stretch occupies residues 154–304 (SGQPGDDQDA…REQNICQRYD (151 aa)). Residues 168–208 (LSKEELIQSMDRVDREIAKVEQQILKLKKKQQQLEEEAAKP) adopt a coiled-coil conformation. Residues 427–478 (QFMNVWTDHEKEIFKEKFVRHPKNFGLIASYLERKNVSDCVLYYYLTKKNEN) enclose the SANT 1 domain. Residues 483-493 (VRRNYPKRRGR) show a composition bias toward basic residues. Disordered regions lie at residues 483 to 649 (VRRN…GSKS), 668 to 912 (NLLQ…FGSR), 1075 to 1122 (SLSD…GTPG), 1417 to 1436 (DLVS…IMEG), 1470 to 1583 (SWGV…QRES), 1737 to 1851 (PGTQ…AQES), and 1916 to 1990 (PQME…TAHT). 2 stretches are compositionally biased toward basic and acidic residues: residues 502–525 (SQEE…KEDE) and 535–548 (KEEL…KIDA). Residues 502–552 (SQEEKEIEKVEEEKADRNDKKEDERREEEEKEEKEELREGAKDKIDAVAED) are a coiled coil. Over residues 582 to 611 (ASEAAAANAVTTATTAPVTTTSTATTVAPV) the composition is skewed to low complexity. Residues 612–627 (PVAPPPEEPTPPPPPQ) show a composition bias toward pro residues. In terms of domain architecture, SANT 2 spans 628–665 (EQSLVDHGRNWGAIAKMVGSKSESQCKNFYFNYKRRHN). Positions 689 to 699 (QCDSIASTVSA) are enriched in polar residues. Over residues 700-719 (QEDDENEASNEEENPEDSEG) the composition is skewed to acidic residues. Composition is skewed to low complexity over residues 727–738 (ESAPSPSPAEAA) and 761–774 (DAAS…SPSP). Basic and acidic residues predominate over residues 854 to 863 (MERLMDRAEA). Polar residues-rich tracts occupy residues 872-891 (QNIS…SATC) and 1102-1122 (ATSS…GTPG). The span at 1484–1501 (KMGERSKHEDTKSSDAIR) shows a compositional bias: basic and acidic residues. The span at 1505-1516 (TSVVSSGPSVLR) shows a compositional bias: polar residues. A compositionally biased stretch (low complexity) spans 1545–1558 (PSPMSRSSPMARSA). Positions 1765–1804 (VSAERERERERERERDREREKEQRERESDRERERDRLAHA) form a coiled coil. The segment covering 1767–1802 (AERERERERERERDREREKEQRERESDRERERDRLA) has biased composition (basic and acidic residues). 2 stretches are compositionally biased toward low complexity: residues 1803 to 1813 (HAAAAAAAASA) and 1820 to 1835 (RPVS…RPSS). A compositionally biased stretch (polar residues) spans 1842–1851 (PSPSVRAQES). The segment covering 1921–1942 (AKPKESKNDSARSEENLSRRNA) has biased composition (basic and acidic residues). Residues 1958-1980 (SPYTSSSFSSSKSQSQPSSAVYS) show a composition bias toward low complexity. Residues 2012-2016 (IDVII) carry the CORNR box 1 motif. The tract at residues 2022–2109 (SDKDGRERNS…SPPQQTIPGH (88 aa)) is disordered. Low complexity predominate over residues 2031–2040 (SQSSDASSSH). Over residues 2043-2052 (HRYEAPRETI) the composition is skewed to basic and acidic residues. Residues 2093-2106 (RYRQQQESPPQQTI) show a composition bias toward polar residues. The CORNR box 2 motif lies at 2123–2127 (ICHII). Residues 2136–2145 (PVNQPLQQPP) show a composition bias toward low complexity. The interval 2136-2222 (PVNQPLQQPP…PISPPQAPML (87 aa)) is disordered. The span at 2146 to 2175 (ASTFQSTNPTSTAVRTKASSRFSPESQVQP) shows a compositional bias: polar residues. A compositionally biased stretch (basic and acidic residues) spans 2190 to 2209 (IPDKPRGRPGKSPDRGHISE). Residues 2326–2330 (LEDII) carry the CORNR box 3 motif. Disordered regions lie at residues 2344 to 2446 (DHGV…YNPL) and 2464 to 2498 (TSMT…DSDE). The segment covering 2353–2362 (QGNQSGTPNS) has biased composition (polar residues). A compositionally biased stretch (basic residues) spans 2380 to 2394 (HKQKLISKYGSRKTK). Composition is skewed to polar residues over residues 2464 to 2476 (TSMT…QQSR) and 2489 to 2498 (QYETLSDSDE).

It belongs to the N-CoR nuclear receptor corepressors family. Forms a large corepressor complex that contains sin3a/b, histone deacetylases hdac1 and hdac2, rbbp4 and possibly rbbp7. Interacts with the thyroid receptor (TR, composed of rxra and thrb) and the retinoid acid receptor (RAR, composed of rxra and rara) in the absence of ligand. Interacts with tbl1xr1-A and possibly tbl1xr1-B. Interacts with zbtb33/kaiso.

The protein localises to the nucleus. Functionally, mediates transcriptional repression by certain nuclear receptors. Participates in complexes which promote histone deacetylation and the formation of repressive chromatin structures which may impede access by the basal transcription machinery. In association with hdac3, may play a role in the regulation of the circadian clock. The protein is Nuclear receptor corepressor 1 (ncor1) of Xenopus laevis (African clawed frog).